We begin with the raw amino-acid sequence, 353 residues long: Rhodopsin (353 aa).

Residues 1 to 36 (MNGTEGPYFYVPMVNTSGIVRSPYEYPQYYLVNPAA) are Extracellular-facing. N-linked (GlcNAc...) asparagine glycosylation is found at N2 and N15. Residues 37–61 (YARLGAYMFLLILVGFPINFLTLYV) traverse the membrane as a helical segment. Topologically, residues 62 to 73 (TIEHKKLRTPLN) are cytoplasmic. A helical transmembrane segment spans residues 74–96 (YILLNLAVADLFMVFGGFTTTMY). At 97–110 (TSMHGYFVLGRLGC) the chain is on the extracellular side. A disulfide bridge links C110 with C187. Residues 111 to 133 (NIEGFFATLGGEIALWSLVVLAI) traverse the membrane as a helical segment. Residues 134–136 (ERW) carry the 'Ionic lock' involved in activated form stabilization motif. Residues 134–152 (ERWVVVCKPISNFRFGENH) are Cytoplasmic-facing. The chain crosses the membrane as a helical span at residues 153-173 (AIMGLAFTWLMALACAAPPLV). Over 174–202 (GWSRYIPEGMQCSCGIDYYTRAEGFNNES) the chain is Extracellular. A glycan (N-linked (GlcNAc...) asparagine) is linked at N200. A helical membrane pass occupies residues 203–224 (FVIYMFVCHFTVPLMVVFFCYG). Topologically, residues 225–252 (RLLCAVKEAAAAQQESETTQRAEREVTR) are cytoplasmic. A helical membrane pass occupies residues 253–274 (MVIMMVVAFLVCWLPYASVAWW). Residues 275-286 (IFTHQGSEFGPV) lie on the Extracellular side of the membrane. The chain crosses the membrane as a helical span at residues 287-308 (FMTIPAFFAKSSSIYNPMIYIC). Position 296 is an N6-(retinylidene)lysine (K296). The Cytoplasmic portion of the chain corresponds to 309–353 (LNKQFRHCMITTLCCGKNPFEEEEGASTASKTEASSVSSSSVSPA). Residues C322 and C323 are each lipidated (S-palmitoyl cysteine). A disordered region spans residues 331 to 353 (EEGASTASKTEASSVSSSSVSPA). Residues 334 to 353 (ASTASKTEASSVSSSSVSPA) show a composition bias toward low complexity.

The protein belongs to the G-protein coupled receptor 1 family. Opsin subfamily. In terms of processing, phosphorylated on some or all of the serine and threonine residues present in the C-terminal region. Post-translationally, contains one covalently linked retinal chromophore.

Its subcellular location is the membrane. It localises to the cell projection. The protein localises to the cilium. It is found in the photoreceptor outer segment. Its function is as follows. Photoreceptor required for image-forming vision at low light intensity. While most salt water fish species use retinal as chromophore, most freshwater fish use 3-dehydroretinal, or a mixture of retinal and 3-dehydroretinal. Light-induced isomerization of 11-cis to all-trans retinal triggers a conformational change that activates signaling via G-proteins. Subsequent receptor phosphorylation mediates displacement of the bound G-protein alpha subunit by arrestin and terminates signaling. The polypeptide is Rhodopsin (rho) (Sarpa salpa (Salema)).